The chain runs to 85 residues: Large ribosomal subunit protein bL27 (85 aa).

Residues 1–20 (MATKKAGGSTRNGRDSEAKR) form a disordered region.

Belongs to the bacterial ribosomal protein bL27 family.

The sequence is that of Large ribosomal subunit protein bL27 from Haemophilus influenzae (strain ATCC 51907 / DSM 11121 / KW20 / Rd).